Reading from the N-terminus, the 136-residue chain is Urease subunit beta (136 aa).

The segment at 113 to 136 (NDEYAGVFGDNGAENVNKKGGKRS) is disordered.

It belongs to the urease beta subunit family. Heterotrimer of UreA (gamma), UreB (beta) and UreC (alpha) subunits. Three heterotrimers associate to form the active enzyme.

The protein localises to the cytoplasm. It carries out the reaction urea + 2 H2O + H(+) = hydrogencarbonate + 2 NH4(+). It participates in nitrogen metabolism; urea degradation; CO(2) and NH(3) from urea (urease route): step 1/1. The chain is Urease subunit beta from Staphylococcus aureus (strain USA300).